Reading from the N-terminus, the 195-residue chain is Large ribosomal subunit protein bL25 (195 aa).

This sequence belongs to the bacterial ribosomal protein bL25 family. CTC subfamily. Part of the 50S ribosomal subunit; part of the 5S rRNA/L5/L18/L25 subcomplex. Contacts the 5S rRNA. Binds to the 5S rRNA independently of L5 and L18.

Its function is as follows. This is one of the proteins that binds to the 5S RNA in the ribosome where it forms part of the central protuberance. In Chlorobium chlorochromatii (strain CaD3), this protein is Large ribosomal subunit protein bL25.